Reading from the N-terminus, the 430-residue chain is Adenylosuccinate synthetase (430 aa).

GTP is bound by residues 12 to 18 (GDEGKGK) and 40 to 42 (GHT). Asp-13 acts as the Proton acceptor in catalysis. Residues Asp-13 and Gly-40 each contribute to the Mg(2+) site. IMP contacts are provided by residues 13-16 (DEGK), 38-41 (NAGH), Thr-128, Arg-142, Gln-223, Thr-238, and Arg-302. His-41 serves as the catalytic Proton donor. Residue 298–304 (TTTGRPR) coordinates substrate. Residues Arg-304, 330-332 (SID), and 412-414 (SVG) each bind GTP.

It belongs to the adenylosuccinate synthetase family. As to quaternary structure, homodimer. Mg(2+) serves as cofactor.

It is found in the cytoplasm. It carries out the reaction IMP + L-aspartate + GTP = N(6)-(1,2-dicarboxyethyl)-AMP + GDP + phosphate + 2 H(+). It functions in the pathway purine metabolism; AMP biosynthesis via de novo pathway; AMP from IMP: step 1/2. Functionally, plays an important role in the de novo pathway of purine nucleotide biosynthesis. Catalyzes the first committed step in the biosynthesis of AMP from IMP. This chain is Adenylosuccinate synthetase, found in Streptococcus pyogenes serotype M5 (strain Manfredo).